Reading from the N-terminus, the 250-residue chain is Flavin-dependent thymidylate synthase (250 aa).

Residues 7-233 (LRVQLIAKTD…PAVFADFEVT (227 aa)) enclose the ThyX domain. Residues serine 71, 95–97 (RHR), and glutamine 103 contribute to the FAD site. DUMP-binding positions include 92 to 95 (ELIR), 103 to 107 (QLSQR), and arginine 172. The ThyX motif signature appears at 95–105 (RHRHFSYSQLS). FAD-binding positions include 188 to 190 (NYR) and histidine 194. Arginine 199 is a binding site for dUMP. The Involved in ionization of N3 of dUMP, leading to its activation role is filled by arginine 199.

Belongs to the thymidylate synthase ThyX family. In terms of assembly, homotetramer. Requires FAD as cofactor.

It catalyses the reaction dUMP + (6R)-5,10-methylene-5,6,7,8-tetrahydrofolate + NADPH + H(+) = dTMP + (6S)-5,6,7,8-tetrahydrofolate + NADP(+). It functions in the pathway pyrimidine metabolism; dTTP biosynthesis. Functionally, catalyzes the reductive methylation of 2'-deoxyuridine-5'-monophosphate (dUMP) to 2'-deoxythymidine-5'-monophosphate (dTMP) while utilizing 5,10-methylenetetrahydrofolate (mTHF) as the methyl donor, and NADPH and FADH(2) as the reductant. The protein is Flavin-dependent thymidylate synthase of Mycobacterium bovis (strain ATCC BAA-935 / AF2122/97).